Here is a 375-residue protein sequence, read N- to C-terminus: tRNA(Met) cytidine acetate ligase (375 aa).

ATP contacts are provided by residues 7–20 (VVEY…HRYH), G101, N151, and R176.

It belongs to the TmcAL family.

It localises to the cytoplasm. The catalysed reaction is cytidine(34) in elongator tRNA(Met) + acetate + ATP = N(4)-acetylcytidine(34) in elongator tRNA(Met) + AMP + diphosphate. In terms of biological role, catalyzes the formation of N(4)-acetylcytidine (ac(4)C) at the wobble position of elongator tRNA(Met), using acetate and ATP as substrates. First activates an acetate ion to form acetyladenylate (Ac-AMP) and then transfers the acetyl group to tRNA to form ac(4)C34. In Limosilactobacillus fermentum (strain NBRC 3956 / LMG 18251) (Lactobacillus fermentum), this protein is tRNA(Met) cytidine acetate ligase.